A 153-amino-acid chain; its full sequence is UPAR/Ly6 domain-containing protein cold (153 aa).

Residues methionine 1–glycine 25 form the signal peptide. The Extracellular portion of the chain corresponds to leucine 26–glutamine 130. Intrachain disulfides connect cysteine 28–cysteine 55, cysteine 31–cysteine 41, cysteine 48–cysteine 81, cysteine 87–cysteine 112, cysteine 99–cysteine 109, and cysteine 113–cysteine 118. N-linked (GlcNAc...) asparagine glycosylation is present at asparagine 33. Serine 124 carries the GPI-anchor amidated serine lipid modification. A propeptide spans glycine 125–serine 153 (removed in mature form). Residues glycine 131–proline 151 traverse the membrane as a helical segment. At arginine 152–serine 153 the chain is on the cytoplasmic side.

The protein belongs to the snake toxin-like superfamily. In terms of processing, GPI-anchored. As to expression, expressed in all tissues that form septate junctions, including hindgut, trachea, epidermis and dorsal pouch. Expressed in subperineurial glial cells that form the hemolymph-brain barrier of the central nervous system.

It localises to the endosome membrane. It is found in the endoplasmic reticulum membrane. The protein resides in the cell membrane. Its subcellular location is the cell junction. The protein localises to the septate junction. Functionally, required for septate junction assembly, possibly by organizing the preassembly and transport of septate junction proteins such as dlg1/disks large 1 and Nrx-IV/Neurexin-IV. Involved in paracellular barrier functions of trachea, hindgut and salivary gland mediated by epithelial cell septate junctions. Involved in paracellular barrier functions of the hemolymph-brain barrier (insect blood-brain barrier) mediated by glial cell septate junctions. Required for maintenance of septate junctions in imaginal disk epithelial cells. Involved in the epithelial cell wound-healing response. Directly or indirectly mediates cell-cell adhesion during septate junction formation. In Drosophila melanogaster (Fruit fly), this protein is UPAR/Ly6 domain-containing protein cold.